The chain runs to 227 residues: Cytochrome c oxidase subunit 2 (227 aa).

Topologically, residues 1-14 (MAYPYELGFQDASS) are mitochondrial intermembrane. The helical transmembrane segment at 15–45 (PIMEELLHFHDHTLMIVFLISTLVLYLITIM) threads the bilayer. Over 46–59 (LTTKLTHTSTMDAQ) the chain is Mitochondrial matrix. Residues 60–87 (EIETIWTILPAIILILIALPSLRILYMM) form a helical membrane-spanning segment. Residues 88 to 227 (DEINSPSLTV…DFEIWSSSML (140 aa)) lie on the Mitochondrial intermembrane side of the membrane. H161, C196, E198, C200, H204, and M207 together coordinate Cu cation. Position 198 (E198) interacts with Mg(2+).

The protein belongs to the cytochrome c oxidase subunit 2 family. In terms of assembly, component of the cytochrome c oxidase (complex IV, CIV), a multisubunit enzyme composed of 14 subunits. The complex is composed of a catalytic core of 3 subunits MT-CO1, MT-CO2 and MT-CO3, encoded in the mitochondrial DNA, and 11 supernumerary subunits COX4I, COX5A, COX5B, COX6A, COX6B, COX6C, COX7A, COX7B, COX7C, COX8 and NDUFA4, which are encoded in the nuclear genome. The complex exists as a monomer or a dimer and forms supercomplexes (SCs) in the inner mitochondrial membrane with NADH-ubiquinone oxidoreductase (complex I, CI) and ubiquinol-cytochrome c oxidoreductase (cytochrome b-c1 complex, complex III, CIII), resulting in different assemblies (supercomplex SCI(1)III(2)IV(1) and megacomplex MCI(2)III(2)IV(2)). Found in a complex with TMEM177, COA6, COX18, COX20, SCO1 and SCO2. Interacts with TMEM177 in a COX20-dependent manner. Interacts with COX20. Interacts with COX16. The cofactor is Cu cation.

The protein resides in the mitochondrion inner membrane. The enzyme catalyses 4 Fe(II)-[cytochrome c] + O2 + 8 H(+)(in) = 4 Fe(III)-[cytochrome c] + 2 H2O + 4 H(+)(out). In terms of biological role, component of the cytochrome c oxidase, the last enzyme in the mitochondrial electron transport chain which drives oxidative phosphorylation. The respiratory chain contains 3 multisubunit complexes succinate dehydrogenase (complex II, CII), ubiquinol-cytochrome c oxidoreductase (cytochrome b-c1 complex, complex III, CIII) and cytochrome c oxidase (complex IV, CIV), that cooperate to transfer electrons derived from NADH and succinate to molecular oxygen, creating an electrochemical gradient over the inner membrane that drives transmembrane transport and the ATP synthase. Cytochrome c oxidase is the component of the respiratory chain that catalyzes the reduction of oxygen to water. Electrons originating from reduced cytochrome c in the intermembrane space (IMS) are transferred via the dinuclear copper A center (CU(A)) of subunit 2 and heme A of subunit 1 to the active site in subunit 1, a binuclear center (BNC) formed by heme A3 and copper B (CU(B)). The BNC reduces molecular oxygen to 2 water molecules using 4 electrons from cytochrome c in the IMS and 4 protons from the mitochondrial matrix. The protein is Cytochrome c oxidase subunit 2 (MT-CO2) of Cavia aperea (Brazilian guinea pig).